Here is a 664-residue protein sequence, read N- to C-terminus: DNA mismatch repair protein MutL (664 aa).

It belongs to the DNA mismatch repair MutL/HexB family.

In terms of biological role, this protein is involved in the repair of mismatches in DNA. It is required for dam-dependent methyl-directed DNA mismatch repair. May act as a 'molecular matchmaker', a protein that promotes the formation of a stable complex between two or more DNA-binding proteins in an ATP-dependent manner without itself being part of a final effector complex. In Clostridium beijerinckii (strain ATCC 51743 / NCIMB 8052) (Clostridium acetobutylicum), this protein is DNA mismatch repair protein MutL.